The following is a 514-amino-acid chain: Double-stranded RNA-binding protein 6 (514 aa).

2 DRBM domains span residues methionine 1 to arginine 70 and valine 87 to glutamine 155. Disordered stretches follow at residues asparagine 195–proline 268 and glutamate 455–histidine 496. 3 stretches are compositionally biased toward polar residues: residues phenylalanine 216–serine 225, alanine 249–proline 263, and serine 473–threonine 484.

Binds double-stranded RNA. The protein is Double-stranded RNA-binding protein 6 (DRB6) of Oryza sativa subsp. japonica (Rice).